The following is a 383-amino-acid chain: Protein delta homolog 1 (383 aa).

Residues 1-23 (MIATGALLRVLLLLLAFGHSTYG) form the signal peptide. EGF-like domains are found at residues 24–55 (AECD…PLCE), 59–86 (TSPG…KFCE), 88–125 (DIRA…KDCQ), 127–168 (KAGP…NFCE), 170–206 (VTNS…KTCS), and 208–245 (PVSN…PTCA). Residues 24 to 306 (AECDPACDPQ…PLLTEGQAIC (283 aa)) are Extracellular-facing. Intrachain disulfides connect cysteine 26–cysteine 37, cysteine 30–cysteine 43, cysteine 45–cysteine 54, cysteine 63–cysteine 68, cysteine 76–cysteine 85, cysteine 92–cysteine 103, cysteine 97–cysteine 113, cysteine 115–cysteine 124, cysteine 131–cysteine 144, cysteine 138–cysteine 156, cysteine 158–cysteine 167, cysteine 174–cysteine 185, cysteine 179–cysteine 194, cysteine 196–cysteine 205, cysteine 212–cysteine 223, cysteine 217–cysteine 233, and cysteine 235–cysteine 244. A helical membrane pass occupies residues 307–327 (FTILGVLTSLVVLGTVAIVFL). Residues 328 to 383 (NKCEAWVSNLRYNHMLRKKKNLLLQYNSGEELAVNIIFPEKIDMTTFNKEAGDEDI) lie on the Cytoplasmic side of the membrane.

As to quaternary structure, monomer. Interacts with SH3RF2. In terms of processing, glycosylated. In terms of tissue distribution, pancreas and adrenal glands (at protein level).

It is found in the membrane. Its subcellular location is the cytoplasm. In terms of biological role, may have a role in neuroendocrine differentiation. Inhibits adipocyte differentiation. The protein is Protein delta homolog 1 (Dlk1) of Rattus norvegicus (Rat).